The following is a 127-amino-acid chain: Putative B3 domain-containing protein At4g12617 (127 aa).

Positions 35-127 (IMMPKTLLEA…HTRLNFKHVA (93 aa)) form a DNA-binding region, TF-B3.

The protein localises to the nucleus. This chain is Putative B3 domain-containing protein At4g12617, found in Arabidopsis thaliana (Mouse-ear cress).